The chain runs to 180 residues: Probable chorismate pyruvate-lyase (180 aa).

Substrate is bound by residues Arg82, Leu120, and Glu165.

It belongs to the UbiC family.

The protein localises to the cytoplasm. It carries out the reaction chorismate = 4-hydroxybenzoate + pyruvate. Its pathway is cofactor biosynthesis; ubiquinone biosynthesis. Removes the pyruvyl group from chorismate, with concomitant aromatization of the ring, to provide 4-hydroxybenzoate (4HB) for the ubiquinone pathway. The protein is Probable chorismate pyruvate-lyase of Aliivibrio fischeri (strain ATCC 700601 / ES114) (Vibrio fischeri).